Here is a 70-residue protein sequence, read N- to C-terminus: Large ribosomal subunit protein eL38 (70 aa).

The protein belongs to the eukaryotic ribosomal protein eL38 family.

This Spodoptera frugiperda (Fall armyworm) protein is Large ribosomal subunit protein eL38 (RpL38).